The primary structure comprises 66 residues: Rho-elapitoxin-Da1b (66 aa).

Disulfide bonds link Cys-3–Cys-24, Cys-17–Cys-42, Cys-46–Cys-58, and Cys-59–Cys-64.

This sequence belongs to the three-finger toxin family. Short-chain subfamily. Aminergic toxin sub-subfamily. As to expression, expressed by the venom gland.

Its subcellular location is the secreted. Functionally, non-competitive antagonist of alpha-2 adrenergic receptors (ADRA2) in smooth muscles, and partial antagonist of D3 dopamine receptors (DRD3) (inhibits 25% of methylspiperone binding to this receptor). Also shows a low antagonism on D2 dopamine receptors (DRD2) (short isoform). Shows high affinity to adrenergic receptors (Ki=14 nM (ADRA2A), Ki=73 nM (ADRA2B), and Ki=38 nM (ADRA2C)). Increases heart rate and blood catecholamine concentrations. The chain is Rho-elapitoxin-Da1b from Dendroaspis angusticeps (Eastern green mamba).